A 253-amino-acid polypeptide reads, in one-letter code: 5-oxoprolinase subunit A (253 aa).

The protein belongs to the LamB/PxpA family. As to quaternary structure, forms a complex composed of PxpA, PxpB and PxpC.

The catalysed reaction is 5-oxo-L-proline + ATP + 2 H2O = L-glutamate + ADP + phosphate + H(+). Catalyzes the cleavage of 5-oxoproline to form L-glutamate coupled to the hydrolysis of ATP to ADP and inorganic phosphate. The chain is 5-oxoprolinase subunit A from Bacillus cereus (strain B4264).